Consider the following 669-residue polypeptide: Protein fem-1 homolog A (669 aa).

ANK repeat units follow at residues 2–31 (DLRT…REEL), 40–70 (GGGT…SVEA), 82–111 (EGAP…SVNR), 115–145 (TNST…DLEV), 149–178 (HGHT…QVNR), 182–211 (KGNT…RMER), and 214–243 (YGMT…GQEQ). Ser108 bears the Phosphoserine mark. The interval 240 to 278 (GQEQVAGGEAQPGLPQEDPSTSQGCAQPQGAPCCSSSPE) is disordered. TPR repeat units lie at residues 298 to 332 (VEAL…RHQG) and 390 to 423 (SYYI…QQSN). 2 ANK repeats span residues 534-576 (NGFT…DPDS) and 580-609 (DNNT…HMDA).

This sequence belongs to the fem-1 family. As to quaternary structure, component of a CRL2 E3 ubiquitin-protein ligase complex, also named ECS (Elongin BC-CUL2/5-SOCS-box protein) complex, composed of CUL2, Elongin BC (ELOB and ELOC), RBX1 and substrate-specific adapter FEM1A. Interacts with PTGER4. Interacts with NFKB1; the interaction is direct. Post-translationally, phosphorylated; highly phosphorylated in myoblasts and myotubes. Phosphorylation at Ser-108 promotes PGE2-EP4-mediated inhibition of inflammation. Dephosphorylated by protein phosphatase 2A (PP2A). Present in macrophages derived from peripheral blood monocytes. Also present in atheromata (at protein level).

Its subcellular location is the mitochondrion. The protein resides in the cytoplasm. It functions in the pathway protein modification; protein ubiquitination. Substrate-recognition component of a Cul2-RING (CRL2) E3 ubiquitin-protein ligase complex of the DesCEND (destruction via C-end degrons) pathway, which recognizes a C-degron located at the extreme C terminus of target proteins, leading to their ubiquitination and degradation. The C-degron recognized by the DesCEND pathway is usually a motif of less than ten residues and can be present in full-length proteins, truncated proteins or proteolytically cleaved forms. The CRL2(FEM1A) complex specifically recognizes proteins with an arginine at the C-terminus: recognizes and binds proteins ending with -Lys/Arg-Xaa-Arg and -Lys/Arg-Xaa-Xaa-Arg C-degrons, such as SIL1 or OR51B2, leading to their ubiquitination and degradation. Promotes ubiquitination and degradation of SLBP. Involved in PGE2-EP4-mediated inhibition of inflammation of macrophages via interaction with NFKB1 and PTGER4. Promotes inflammation in brain microglia through MAP2K4/MKK4-mediated signaling. This chain is Protein fem-1 homolog A, found in Homo sapiens (Human).